The following is a 320-amino-acid chain: Solute carrier family 35 member B1 (320 aa).

Helical transmembrane passes span 9 to 29, 49 to 69, 81 to 103, 134 to 154, 166 to 186, 202 to 222, 241 to 261, and 283 to 303; these read GLRL…YGIL, FALS…KLLI, QSWL…NSAL, YPLT…LFMY, TVGY…LTGV, MMLS…VLTG, IVLF…TVVY, and VILF…LVFL. A Di-lysine motif motif is present at residues 316 to 320; that stretch reads KKPSH.

The protein belongs to the nucleotide-sugar transporter family. SLC35B subfamily.

Its subcellular location is the endoplasmic reticulum membrane. Probable sugar transporter. This is Solute carrier family 35 member B1 (slc35b1) from Xenopus laevis (African clawed frog).